We begin with the raw amino-acid sequence, 273 residues long: 4-hydroxy-tetrahydrodipicolinate reductase (273 aa).

NAD(+)-binding positions include 8-13 (GAAGRM), Glu34, 102-104 (GTT), and 128-131 (SSNM). The active-site Proton donor/acceptor is His160. His161 lines the (S)-2,3,4,5-tetrahydrodipicolinate pocket. The Proton donor role is filled by Lys164. A (S)-2,3,4,5-tetrahydrodipicolinate-binding site is contributed by 170–171 (GT).

This sequence belongs to the DapB family.

The protein localises to the cytoplasm. It catalyses the reaction (S)-2,3,4,5-tetrahydrodipicolinate + NAD(+) + H2O = (2S,4S)-4-hydroxy-2,3,4,5-tetrahydrodipicolinate + NADH + H(+). The catalysed reaction is (S)-2,3,4,5-tetrahydrodipicolinate + NADP(+) + H2O = (2S,4S)-4-hydroxy-2,3,4,5-tetrahydrodipicolinate + NADPH + H(+). It participates in amino-acid biosynthesis; L-lysine biosynthesis via DAP pathway; (S)-tetrahydrodipicolinate from L-aspartate: step 4/4. Its function is as follows. Catalyzes the conversion of 4-hydroxy-tetrahydrodipicolinate (HTPA) to tetrahydrodipicolinate. The chain is 4-hydroxy-tetrahydrodipicolinate reductase from Methanobrevibacter smithii (strain ATCC 35061 / DSM 861 / OCM 144 / PS).